The sequence spans 443 residues: tRNA-2-methylthio-N(6)-dimethylallyladenosine synthase (443 aa).

The MTTase N-terminal domain maps to Lys12 to Ala126. 6 residues coordinate [4Fe-4S] cluster: Cys21, Cys57, Cys89, Cys162, Cys166, and Cys169. The Radical SAM core domain occupies Arg148–Ala380. A TRAM domain is found at Lys383 to Ala443.

This sequence belongs to the methylthiotransferase family. MiaB subfamily. Monomer. [4Fe-4S] cluster is required as a cofactor.

It is found in the cytoplasm. The catalysed reaction is N(6)-dimethylallyladenosine(37) in tRNA + (sulfur carrier)-SH + AH2 + 2 S-adenosyl-L-methionine = 2-methylsulfanyl-N(6)-dimethylallyladenosine(37) in tRNA + (sulfur carrier)-H + 5'-deoxyadenosine + L-methionine + A + S-adenosyl-L-homocysteine + 2 H(+). Catalyzes the methylthiolation of N6-(dimethylallyl)adenosine (i(6)A), leading to the formation of 2-methylthio-N6-(dimethylallyl)adenosine (ms(2)i(6)A) at position 37 in tRNAs that read codons beginning with uridine. The sequence is that of tRNA-2-methylthio-N(6)-dimethylallyladenosine synthase from Novosphingobium aromaticivorans (strain ATCC 700278 / DSM 12444 / CCUG 56034 / CIP 105152 / NBRC 16084 / F199).